We begin with the raw amino-acid sequence, 895 residues long: MRMSVGSAVPLPLWGRTFLLLLSVAVTQSHWPSEPSEAVRDWENQLEASMHSALSDLHETVPTVVGIPDGTAVVGRSFRVTIPTDLIASNGEVIKVSAAGKEALPSWLHWDPQSHTLEGLPLDTDKGVHYISVSAARLGANGSHVPQTSSVFSIEVYPEDHSEPQSLRAASPDPGEVVSLVCAADEPVTVLTVILDADLTKMTPKQRIDLLRRMRGFSEVEPHNMKLVPVVNNRLFDMSAFMAGPGNAKKVVENGALLSWKLGCCLNQNSVPDIRGVEVPAREGAMSAQLGYPVVGWHIANKKPSLPKRIRRQIHATPTPVTAIGPPTTAIQEPPSRIVPTPTSPAIAPPTETMAPPVRDPVPGKPTVTIRTRGAIIQTPTLGPIQPTRVSEAGTTVPSQIRPTMTIPGYMEPSTVTTPPTTTTKKPRVSTPRPATPSTDSSTTTTRRPTKKPRTSRPVPRVTTKAPITRLETASPATRMRTTTSGVPHGGEPNQRPELKNHIDRVDAWVGTYFEVKIPSDTFYDNEDTTTDKLKLTLKLREQQLVGEKSWVQFNSNSQLMYGLPDSSHVGKHEYFMHATDKGGLSAVDAFEIHVHRRPQGDKAPARFKAKLTGDPAAVTNDIHKKIALVKKLAFAFGDRNCSTITLQNITRGSIVVEWTNNTLPLEPCPKEQITALSRRIAEDDGKPRGAFVNALEPDFQAMSITVTGSGSCRHLQFVPVAPPMRVPSEAPATEVPDRDPEKSSEDDVYLHTVIPAVVVAAILLIAGIIAMICYRKKRKGKLTLEDQATFIKKGVPIIFADELDDSKPPPSSSMPLILQEEKAPLPPPEYPNQSMPETTPLNQDTVGEYAPLRDEDPSAPPYQPPPPFTAPMEGKGSRPKNMTPYRSPPPYVPP.

The signal sequence occupies residues 1–29 (MRMSVGSAVPLPLWGRTFLLLLSVAVTQS). Residues 30-408 (HWPSEPSEAV…SQIRPTMTIP (379 aa)) are required for laminin recognition. Positions 49-71 (SMHSALSDLHETVPTVVGIPDGT) are O-glycosylated at one site. N141 carries N-linked (GlcNAc...) asparagine glycosylation. The cysteines at positions 182 and 264 are disulfide-linked. A mucin-like domain region spans residues 316–485 (ATPTPVTAIG…PATRMRTTTS (170 aa)). T317, T319, and T379 each carry an O-linked (Man6P...) threonine glycan. The interval 381–500 (TLGPIQPTRV…GEPNQRPELK (120 aa)) is disordered. Positions 393–403 (AGTTVPSQIRP) are enriched in polar residues. The segment covering 413–447 (PSTVTTPPTTTTKKPRVSTPRPATPSTDSSTTTTR) has biased composition (low complexity). An O-glycosylated at seven sites with GalNAc region spans residues 463-485 (TTKAPITRLETASPATRMRTTTS). A Peptidase S72 domain is found at 603-712 (KAPARFKAKL…MSITVTGSGS (110 aa)). N-linked (GlcNAc...) asparagine glycans are attached at residues N641, N649, and N661. Topologically, residues 654 to 749 (SIVVEWTNNT…DPEKSSEDDV (96 aa)) are extracellular. Residues C669 and C713 are joined by a disulfide bond. The tract at residues 724-747 (PMRVPSEAPATEVPDRDPEKSSED) is disordered. Residues 736–747 (VPDRDPEKSSED) show a composition bias toward basic and acidic residues. A helical membrane pass occupies residues 750 to 775 (YLHTVIPAVVVAAILLIAGIIAMICY). The Nuclear localization signal signature appears at 776-782 (RKKRKGK). The Cytoplasmic portion of the chain corresponds to 776-895 (RKKRKGKLTL…YRSPPPYVPP (120 aa)). Position 790 is a phosphothreonine (T790). The tract at residues 819–895 (LQEEKAPLPP…YRSPPPYVPP (77 aa)) is required for interaction with CAV3. The tract at residues 823-895 (KAPLPPPEYP…YRSPPPYVPP (73 aa)) is disordered. Polar residues predominate over residues 832–846 (PNQSMPETTPLNQDT). Residues 859–870 (SAPPYQPPPPFT) are compositionally biased toward pro residues. Positions 880–895 (PKNMTPYRSPPPYVPP) are required for binding DMD and UTRN. The PPXY motif motif lies at 889-892 (PPPY). Y892 is subject to Phosphotyrosine; by SRC.

As to quaternary structure, monomer. Heterodimer of alpha- and beta-dystroglycan subunits which are the central components of the dystrophin-glycoprotein complex. This complex then can form a dystrophin-associated glycoprotein complex (DGC) which is composed of three subcomplexes: a cytoplasmic complex comprised of DMD (or UTRN), DTNA and a number of syntrophins, such as SNTB1, SNTB2, SNTG1 and SNTG2, the transmembrane dystroglycan complex, and the sarcoglycan-sarcospan complex. Interacts (via the N-terminal of alphaDAG1) with LARGE1; the interaction enhances laminin binding. Interacts with SGCD. Interacts with AGR2 and AGR3. Interacts (betaDAG1) with DMD; the interaction is inhibited by phosphorylation on the PPXY motif. Interacts (betaDAG1, via its PPXY motif) with UTRN (via its WWW and ZZ domains); the interaction is inhibited by phosphorylation on the PPXY motif. Interacts (betaDAG1, via its phosphorylated PPXY motif) with the SH2 domain-containing proteins, FYN, CSK, NCK and SHC. Interacts (betaDAG1) with CAV3 (via a central WW-like domain); the interaction disrupts the binding of DMD. BetaDAG1 directly interacts with ANK3, but not with ANK2; this interaction does not interfere with DMD-binding and is required for retention at costameres. Identified in a dystroglycan complex that contains at least PRX, DRP2, UTRN, DMD and DAG1. Interacts with POMGNT1. BetaDAG1 interacts with CD93. O-glycosylated. POMGNT1 catalyzes the initial addition of N-acetylglucosamine, giving rise to the GlcNAc(beta1-2)Man(alpha1-)O-Ser/Thr moiety and thus providing the necessary basis for the addition of further carbohydrate moieties. Heavily O-glycosylated comprising of up to two thirds of its mass and the carbohydrate composition differs depending on tissue type. Mucin-type O-glycosylation is important for ligand binding activity. O-mannosylation is found in high abundance in both brain and muscle where the most abundant glycan is Sia-alpha-2-3-Gal-beta-1-4-Glc-NAc-beta-1-2-Man. In muscle, glycosylation on Thr-317, Thr-319 and Thr-379 by a phosphorylated O-mannosyl glycan with the structure 2-(N-acetylamido)-2-deoxygalactosyl-beta-1,3-2-(N-acetylamido)-2-deoxyglucosyl-beta-1,4-6-phosphomannose is mediated by like-acetylglucosaminyltransferase (LARGE1) protein amd is required for laminin binding. O-glycosylated in the N-terminal region with a core 1 or possibly core 8 glycan. The brain form displays a unique glycosylation pattern which is absent in other tissues; this form shows enhanced binding to laminin LAMA5 compared to the skeletal muscle form. Post-translationally, N-glycosylated. In terms of processing, autolytic cleavage produces the alpha and beta subunits. In cutaneous cells, as well as in certain pathological conditions, shedding of beta-dystroglycan can occur releasing a peptide of about 30 kDa. SRC-mediated phosphorylation of the PPXY motif of the beta subunit recruits SH2 domain-containing proteins, but inhibits binding to WWW domain-containing proteins, DMD and UTRN. This phosphorylation also inhibits nuclear entry. In terms of tissue distribution, expressed in brain (at protein level). Expressed in the myelin sheath of peripheral nerves.

It is found in the secreted. The protein resides in the extracellular space. It localises to the cell membrane. Its subcellular location is the cytoplasm. The protein localises to the cytoskeleton. It is found in the nucleus. The protein resides in the nucleoplasm. It localises to the sarcolemma. Its subcellular location is the postsynaptic cell membrane. Functionally, the dystroglycan complex is involved in a number of processes including laminin and basement membrane assembly, sarcolemmal stability, cell survival, peripheral nerve myelination, nodal structure, cell migration, and epithelial polarization. Extracellular peripheral glycoprotein that acts as a receptor for extracellular matrix proteins containing laminin-G domains. Receptor for laminin-2 (LAMA2) and agrin in peripheral nerve Schwann cells. Also acts as a receptor for laminin LAMA5. In terms of biological role, transmembrane protein that plays important roles in connecting the extracellular matrix to the cytoskeleton. Acts as a cell adhesion receptor in both muscle and non-muscle tissues. Receptor for both DMD and UTRN and, through these interactions, scaffolds axin to the cytoskeleton. Also functions in cell adhesion-mediated signaling and implicated in cell polarity. This Bos taurus (Bovine) protein is Dystroglycan 1.